The sequence spans 412 residues: Hyaluronidase-3 (412 aa).

The first 22 residues, 1-22 (MITQLGLTLVVGLTLCLVHVQA), serve as a signal peptide directing secretion. 5 disulfide bridges follow: C42–C332, C206–C221, C357–C368, C362–C396, and C398–C407. N69 is a glycosylation site (N-linked (GlcNAc...) asparagine). Catalysis depends on E129, which acts as the Proton donor. An N-linked (GlcNAc...) asparagine glycan is attached at N216. One can recognise an EGF-like domain in the interval 353-408 (AATACSHQRCHGHGRCSWKDPGQMEAFLHLQPDDNLGAWKSFRCRCYLGWSGPTCL).

This sequence belongs to the glycosyl hydrolase 56 family. N-glycosylated.

It localises to the secreted. The protein localises to the cell membrane. The protein resides in the cytoplasmic vesicle. Its subcellular location is the secretory vesicle. It is found in the acrosome. It localises to the endoplasmic reticulum. The protein localises to the early endosome. The catalysed reaction is Random hydrolysis of (1-&gt;4)-linkages between N-acetyl-beta-D-glucosamine and D-glucuronate residues in hyaluronate.. Its function is as follows. Facilitates sperm penetration into the layer of cumulus cells surrounding the egg by digesting hyaluronic acid. Involved in induction of the acrosome reaction in the sperm. Involved in follicular atresia, the breakdown of immature ovarian follicles that are not selected to ovulate. Induces ovarian granulosa cell apoptosis, possibly via apoptotic signaling pathway involving CASP8 and CASP3 activation, and poly(ADP-ribose) polymerase (PARP) cleavage. Has no hyaluronidase activity in embryonic fibroblasts in vitro. Has no hyaluronidase activity in granulosa cells in vitro. The protein is Hyaluronidase-3 (Hyal3) of Rattus norvegicus (Rat).